Here is a 317-residue protein sequence, read N- to C-terminus: MPVRLVFAGTPEPALPALRRLLDSPRHEVIAVLTRPDAASGRRGKPEPSPVAREALDRGIPVLRPARPNSPEFVAELAQLAPDCCAVVAYGALLRDELLAVPPHGWINLHFSLLPAWRGAAPVQAAIAAGDTITGATTFRIEPALDSGPIYGVVTEAIRPTDTAGELLARLAVSGAELLSATLDGIADSTLTPRPQPAEGVSIAPKITVEQARVRWDLPAPVVERRIRAVTPNPGAWTVIGDLRIKLGPVRLGAASDLPAPPEPLPPGAIHVDRKSVWVGTASDPVRLDQIQPPGKKFMNAVDWARGARLDPAARAT.

112–115 (SLLP) is a binding site for (6S)-5,6,7,8-tetrahydrofolate.

This sequence belongs to the Fmt family.

The catalysed reaction is L-methionyl-tRNA(fMet) + (6R)-10-formyltetrahydrofolate = N-formyl-L-methionyl-tRNA(fMet) + (6S)-5,6,7,8-tetrahydrofolate + H(+). Its function is as follows. Attaches a formyl group to the free amino group of methionyl-tRNA(fMet). The formyl group appears to play a dual role in the initiator identity of N-formylmethionyl-tRNA by promoting its recognition by IF2 and preventing the misappropriation of this tRNA by the elongation apparatus. The chain is Methionyl-tRNA formyltransferase from Mycobacterium avium (strain 104).